Consider the following 369-residue polypeptide: GDSL esterase/lipase At5g42170 (369 aa).

The first 16 residues, 1-16, serve as a signal peptide directing secretion; sequence MSRLVYVIFLLVVVEG. Residues N28 and N45 are each glycosylated (N-linked (GlcNAc...) asparagine). The Nucleophile role is filled by S57. N-linked (GlcNAc...) asparagine glycans are attached at residues N203 and N336. Residues D344 and H347 contribute to the active site.

It belongs to the 'GDSL' lipolytic enzyme family.

Its subcellular location is the secreted. The chain is GDSL esterase/lipase At5g42170 from Arabidopsis thaliana (Mouse-ear cress).